Consider the following 382-residue polypeptide: Mannitol-1-phosphate 5-dehydrogenase (382 aa).

NAD(+) is bound at residue Ala-4 to Gly-15.

The protein belongs to the mannitol dehydrogenase family. In terms of assembly, monomer.

It catalyses the reaction D-mannitol 1-phosphate + NAD(+) = beta-D-fructose 6-phosphate + NADH + H(+). This is Mannitol-1-phosphate 5-dehydrogenase (mtlD) from Streptococcus mutans serotype c (strain ATCC 700610 / UA159).